A 129-amino-acid polypeptide reads, in one-letter code: UPF0344 protein MW0851 (129 aa).

4 helical membrane passes run 1 to 21 (MLHL…ATYL), 36 to 56 (LHMI…WILI), 67 to 87 (MLLT…EVSI), and 99 to 119 (MFWI…ILPL).

The protein belongs to the UPF0344 family.

The protein resides in the cell membrane. In Staphylococcus aureus (strain MW2), this protein is UPF0344 protein MW0851.